We begin with the raw amino-acid sequence, 135 residues long: UPF0355 protein SACOL0457 (135 aa).

Belongs to the UPF0355 family.

The chain is UPF0355 protein SACOL0457 from Staphylococcus aureus (strain COL).